Reading from the N-terminus, the 127-residue chain is MSDGVKHINSAQEFANLLNTTQYVVADFYADWCGPCKAIAPMYAQFAKTFSIPNFLAFAKINVDSVQQVAQHYRVSAMPTFLFFKNGKQVAVNGSVMIQGADVNSLRAAAEKMGRLAKEKAAAAGSS.

The Thioredoxin domain occupies 2 to 115; sequence SDGVKHINSA…LRAAAEKMGR (114 aa). Active-site nucleophile residues include C33 and C36. C33 and C36 are joined by a disulfide.

This sequence belongs to the thioredoxin family.

Functionally, participates in various redox reactions through the reversible oxidation of its active center dithiol to a disulfide and catalyzes dithiol-disulfide exchange reactions. This chain is Thioredoxin (trx), found in Neurospora crassa (strain ATCC 24698 / 74-OR23-1A / CBS 708.71 / DSM 1257 / FGSC 987).